Here is a 478-residue protein sequence, read N- to C-terminus: Sulfate adenylyltransferase subunit 1 (478 aa).

The tr-type G domain maps to 28–244 (KTMLRFLTCG…LESVDVVNAR (217 aa)). The segment at 37-44 (GSVDDGKS) is G1. 37–44 (GSVDDGKS) contributes to the GTP binding site. The segment at 95 to 99 (GITID) is G2. The segment at 116–119 (DTPG) is G3. GTP contacts are provided by residues 116–120 (DTPGH) and 171–174 (NKMD). The G4 stretch occupies residues 171-174 (NKMD). Positions 209-211 (SAL) are G5.

This sequence belongs to the TRAFAC class translation factor GTPase superfamily. Classic translation factor GTPase family. CysN/NodQ subfamily. As to quaternary structure, heterodimer composed of CysD, the smaller subunit, and CysN.

It carries out the reaction sulfate + ATP + H(+) = adenosine 5'-phosphosulfate + diphosphate. It participates in sulfur metabolism; hydrogen sulfide biosynthesis; sulfite from sulfate: step 1/3. Functionally, with CysD forms the ATP sulfurylase (ATPS) that catalyzes the adenylation of sulfate producing adenosine 5'-phosphosulfate (APS) and diphosphate, the first enzymatic step in sulfur assimilation pathway. APS synthesis involves the formation of a high-energy phosphoric-sulfuric acid anhydride bond driven by GTP hydrolysis by CysN coupled to ATP hydrolysis by CysD. This Yersinia pseudotuberculosis serotype O:1b (strain IP 31758) protein is Sulfate adenylyltransferase subunit 1.